A 365-amino-acid polypeptide reads, in one-letter code: Aminomethyltransferase (365 aa).

The protein belongs to the GcvT family. In terms of assembly, the glycine cleavage system is composed of four proteins: P, T, L and H.

It catalyses the reaction N(6)-[(R)-S(8)-aminomethyldihydrolipoyl]-L-lysyl-[protein] + (6S)-5,6,7,8-tetrahydrofolate = N(6)-[(R)-dihydrolipoyl]-L-lysyl-[protein] + (6R)-5,10-methylene-5,6,7,8-tetrahydrofolate + NH4(+). Functionally, the glycine cleavage system catalyzes the degradation of glycine. The polypeptide is Aminomethyltransferase (Bacillus pumilus (strain SAFR-032)).